Here is a 121-residue protein sequence, read N- to C-terminus: Large ribosomal subunit protein uL14 (121 aa).

This sequence belongs to the universal ribosomal protein uL14 family. Part of the 50S ribosomal subunit. Forms a cluster with proteins L3 and L19. In the 70S ribosome, L14 and L19 interact and together make contacts with the 16S rRNA in bridges B5 and B8.

In terms of biological role, binds to 23S rRNA. Forms part of two intersubunit bridges in the 70S ribosome. This is Large ribosomal subunit protein uL14 from Parabacteroides distasonis (strain ATCC 8503 / DSM 20701 / CIP 104284 / JCM 5825 / NCTC 11152).